We begin with the raw amino-acid sequence, 408 residues long: Dual-specificity RNA methyltransferase RlmN (408 aa).

The active-site Proton acceptor is the Glu122. In terms of domain architecture, Radical SAM core spans 128-369 (EEDRGTLCIS…NRAGYASPIR (242 aa)). Cys135 and Cys380 are disulfide-bonded. Positions 142, 146, and 149 each coordinate [4Fe-4S] cluster. S-adenosyl-L-methionine is bound by residues 206–207 (GE), Ser238, 260–262 (SLH), and Asn337. Cys380 functions as the S-methylcysteine intermediate in the catalytic mechanism.

This sequence belongs to the radical SAM superfamily. RlmN family. [4Fe-4S] cluster is required as a cofactor.

The protein localises to the cytoplasm. The catalysed reaction is adenosine(2503) in 23S rRNA + 2 reduced [2Fe-2S]-[ferredoxin] + 2 S-adenosyl-L-methionine = 2-methyladenosine(2503) in 23S rRNA + 5'-deoxyadenosine + L-methionine + 2 oxidized [2Fe-2S]-[ferredoxin] + S-adenosyl-L-homocysteine. It carries out the reaction adenosine(37) in tRNA + 2 reduced [2Fe-2S]-[ferredoxin] + 2 S-adenosyl-L-methionine = 2-methyladenosine(37) in tRNA + 5'-deoxyadenosine + L-methionine + 2 oxidized [2Fe-2S]-[ferredoxin] + S-adenosyl-L-homocysteine. Specifically methylates position 2 of adenine 2503 in 23S rRNA and position 2 of adenine 37 in tRNAs. m2A2503 modification seems to play a crucial role in the proofreading step occurring at the peptidyl transferase center and thus would serve to optimize ribosomal fidelity. This is Dual-specificity RNA methyltransferase RlmN from Chelativorans sp. (strain BNC1).